A 332-amino-acid polypeptide reads, in one-letter code: L-lactate dehydrogenase A chain (332 aa).

N-acetylalanine is present on Ala-2. Lys-5 bears the N6-acetyllysine; alternate mark. Lys-5 carries the post-translational modification N6-succinyllysine; alternate. Lys-14 is modified (N6-acetyllysine). At Thr-18 the chain carries Phosphothreonine. An NAD(+)-binding site is contributed by 29–57 (GAVGMACAISILMKDLADELALVDVIEDK). An N6-acetyllysine; alternate modification is found at Lys-57. Residue Lys-57 forms a Glycyl lysine isopeptide (Lys-Gly) (interchain with G-Cter in SUMO2); alternate linkage. Lys-81 carries the post-translational modification N6-acetyllysine. Arg-99 provides a ligand contact to NAD(+). A substrate-binding site is contributed by Arg-106. N6-acetyllysine; alternate is present on Lys-118. The residue at position 118 (Lys-118) is an N6-succinyllysine; alternate. Residue Lys-126 is modified to N6-acetyllysine. Substrate is bound by residues Asn-138 and Arg-169. His-193 functions as the Proton acceptor in the catalytic mechanism. Lys-224 and Lys-232 each carry N6-acetyllysine. The residue at position 239 (Tyr-239) is a Phosphotyrosine. Lys-243 carries the N6-acetyllysine modification. Thr-248 serves as a coordination point for substrate. Thr-309 carries the post-translational modification Phosphothreonine. At Ser-310 the chain carries Phosphoserine. The residue at position 318 (Lys-318) is an N6-acetyllysine; alternate. Lys-318 is modified (N6-succinyllysine; alternate). Phosphothreonine is present on Thr-322.

Belongs to the LDH/MDH superfamily. LDH family. Homotetramer. Interacts with PTEN upstream reading frame protein MP31. In terms of processing, ISGylated.

The protein resides in the cytoplasm. The catalysed reaction is (S)-lactate + NAD(+) = pyruvate + NADH + H(+). It functions in the pathway fermentation; pyruvate fermentation to lactate; (S)-lactate from pyruvate: step 1/1. Functionally, interconverts simultaneously and stereospecifically pyruvate and lactate with concomitant interconversion of NADH and NAD(+). This Pan troglodytes (Chimpanzee) protein is L-lactate dehydrogenase A chain (LDHA).